The chain runs to 418 residues: Tryptophan synthase beta chain (418 aa).

The span at 1–18 (MTSTLPKASQPDPSSLQP) shows a compositional bias: polar residues. Residues 1-28 (MTSTLPKASQPDPSSLQPSARPGAHGRF) are disordered. Lysine 111 bears the N6-(pyridoxal phosphate)lysine mark.

This sequence belongs to the TrpB family. In terms of assembly, tetramer of two alpha and two beta chains. The cofactor is pyridoxal 5'-phosphate.

It catalyses the reaction (1S,2R)-1-C-(indol-3-yl)glycerol 3-phosphate + L-serine = D-glyceraldehyde 3-phosphate + L-tryptophan + H2O. The protein operates within amino-acid biosynthesis; L-tryptophan biosynthesis; L-tryptophan from chorismate: step 5/5. In terms of biological role, the beta subunit is responsible for the synthesis of L-tryptophan from indole and L-serine. This Synechococcus sp. (strain CC9902) protein is Tryptophan synthase beta chain.